Consider the following 300-residue polypeptide: MEKVRRILVHLSKENAAPQCARFLQSITGHFVGSAEDQATVSCSLENNRFILGDRLCDGGVPLKRASFCPIKYLSDSEAVSLPSETLSRGVDVGVAVLLQSANQKLLLTRRASSLRSFPNVWVPPGGHVELDEKLLDAGLRELLEETGLNLSPDEICSRLLGLWESVYPPMLTIGLPKRHHIVTYILLKSSQTHLQIQASLRPDPAEVSACVWVDADLVKAVVSAVDGEKECVQIPADLPESIGVTKVSPDGEMSESSLPVSVLCNRAPDYGEDIERVSTGTKFALELWLKTLEHHADMG.

One can recognise a Nudix hydrolase domain in the interval 88 to 239 (SRGVDVGVAV…KECVQIPADL (152 aa)). Positions 127–148 (GHVELDEKLLDAGLRELLEETG) match the Nudix box motif. Mg(2+)-binding residues include Glu-142 and Glu-146.

Belongs to the Nudix hydrolase family. The cofactor is Mg(2+). It depends on Mn(2+) as a cofactor.

It carries out the reaction a 5'-end (N(7)-methyl 5'-triphosphoguanosine)-ribonucleoside in mRNA + H2O = N(7)-methyl-GDP + a 5'-end phospho-ribonucleoside in mRNA + 2 H(+). Functionally, acts as a decapping enzyme capable of hydrolyzing monomethylated capped RNAs (in vitro). Hydrolyzes monomethylated capped RNA after alpha and beta phosphates to form N(7)-methyl-GDP. Shows low activity towards unmethylated capped RNA. This Danio rerio (Zebrafish) protein is m7GpppN-mRNA hydrolase NUDT17 (nudt17).